Here is a 251-residue protein sequence, read N- to C-terminus: Duodenase-1 (251 aa).

The first 17 residues, 1 to 17 (MVLLLLLVALLSPTGEA), serve as a signal peptide directing secretion. Positions 18–19 (GK) are excised as a propeptide. Residues 20-242 (IIGGHEAKPH…SFLSWIHSTM (223 aa)) enclose the Peptidase S1 domain. A disulfide bridge links Cys-48 with Cys-64. The active-site Charge relay system is His-63. An N-linked (GlcNAc...) asparagine glycan is attached at Asn-70. The active-site Charge relay system is Asp-107. 2 cysteine pairs are disulfide-bonded: Cys-141-Cys-207 and Cys-172-Cys-186. Ser-201 serves as the catalytic Charge relay system.

This sequence belongs to the peptidase S1 family. As to quaternary structure, monomer.

Its function is as follows. Protease which has both trypsin-like and chymotrypsin-like activities. Shows a preferential cleavage after Lys, Arg, Tyr, Phe, and Leu residues. The sequence is that of Duodenase-1 (BDMD1) from Bos taurus (Bovine).